Consider the following 268-residue polypeptide: Shikimate dehydrogenase (NADP(+)) (268 aa).

Residues 13–15 and T60 contribute to the shikimate site; that span reads SLS. Residue K64 is the Proton acceptor of the active site. Position 76 (E76) interacts with NADP(+). Shikimate contacts are provided by N85 and D100. NADP(+) contacts are provided by residues 124–128, 148–153, and I209; these read GAGGA and NRTMAR. Y211 lines the shikimate pocket. G232 is a binding site for NADP(+).

This sequence belongs to the shikimate dehydrogenase family. Homodimer.

The enzyme catalyses shikimate + NADP(+) = 3-dehydroshikimate + NADPH + H(+). Its pathway is metabolic intermediate biosynthesis; chorismate biosynthesis; chorismate from D-erythrose 4-phosphate and phosphoenolpyruvate: step 4/7. Functionally, involved in the biosynthesis of the chorismate, which leads to the biosynthesis of aromatic amino acids. Catalyzes the reversible NADPH linked reduction of 3-dehydroshikimate (DHSA) to yield shikimate (SA). In Staphylococcus aureus (strain USA300), this protein is Shikimate dehydrogenase (NADP(+)).